Here is a 290-residue protein sequence, read N- to C-terminus: Porphobilinogen deaminase (290 aa).

Cys-237 is modified (S-(dipyrrolylmethanemethyl)cysteine).

This sequence belongs to the HMBS family. As to quaternary structure, monomer. Dipyrromethane is required as a cofactor.

It catalyses the reaction 4 porphobilinogen + H2O = hydroxymethylbilane + 4 NH4(+). It participates in porphyrin-containing compound metabolism; protoporphyrin-IX biosynthesis; coproporphyrinogen-III from 5-aminolevulinate: step 2/4. Tetrapolymerization of the monopyrrole PBG into the hydroxymethylbilane pre-uroporphyrinogen in several discrete steps. In Clostridium botulinum (strain Langeland / NCTC 10281 / Type F), this protein is Porphobilinogen deaminase.